Here is a 519-residue protein sequence, read N- to C-terminus: Anthranilate synthase component 1 (519 aa).

L-tryptophan-binding positions include Thr40 and 293–295; that span reads PYM. 330 to 331 is a binding site for chorismate; sequence GT. Mg(2+) is bound at residue Glu363. Chorismate contacts are provided by residues Tyr451, Arg471, 485-487, and Gly487; that span reads GSG. Position 500 (Glu500) interacts with Mg(2+).

This sequence belongs to the anthranilate synthase component I family. As to quaternary structure, heterotetramer consisting of two non-identical subunits: a beta subunit (TrpG) and a large alpha subunit (TrpE). It depends on Mg(2+) as a cofactor.

It catalyses the reaction chorismate + L-glutamine = anthranilate + pyruvate + L-glutamate + H(+). It functions in the pathway amino-acid biosynthesis; L-tryptophan biosynthesis; L-tryptophan from chorismate: step 1/5. With respect to regulation, feedback inhibited by tryptophan. In terms of biological role, part of a heterotetrameric complex that catalyzes the two-step biosynthesis of anthranilate, an intermediate in the biosynthesis of L-tryptophan. In the first step, the glutamine-binding beta subunit (TrpG) of anthranilate synthase (AS) provides the glutamine amidotransferase activity which generates ammonia as a substrate that, along with chorismate, is used in the second step, catalyzed by the large alpha subunit of AS (TrpE) to produce anthranilate. In the absence of TrpG, TrpE can synthesize anthranilate directly from chorismate and high concentrations of ammonia. In Buchnera aphidicola subsp. Diuraphis noxia, this protein is Anthranilate synthase component 1 (trpE).